We begin with the raw amino-acid sequence, 81 residues long: Large ribosomal subunit protein bL31 (81 aa).

Residues Cys-16, Cys-18, Cys-38, and Cys-41 each contribute to the Zn(2+) site.

This sequence belongs to the bacterial ribosomal protein bL31 family. Type A subfamily. As to quaternary structure, part of the 50S ribosomal subunit. Requires Zn(2+) as cofactor.

Functionally, binds the 23S rRNA. This Mycobacterium marinum (strain ATCC BAA-535 / M) protein is Large ribosomal subunit protein bL31.